The sequence spans 255 residues: Adenosylcobinamide-GDP ribazoletransferase (255 aa).

6 consecutive transmembrane segments (helical) span residues 24-44 (LIAYVPLVALFDAALAASLYV), 45-65 (AIYGISKLLASFISVSAIYIV), 98-118 (VGAGGVFTLIFVYLLALISLS), 122-142 (LYIGIFSIILAEFLSKSMMMI), 164-184 (KHDSLYTVEFVVIPIVLALLS), and 187-207 (SIMISVALAFLIFIIVKMAVI).

The protein belongs to the CobS family. Mg(2+) serves as cofactor.

The protein resides in the cell membrane. The enzyme catalyses alpha-ribazole + adenosylcob(III)inamide-GDP = adenosylcob(III)alamin + GMP + H(+). It carries out the reaction alpha-ribazole 5'-phosphate + adenosylcob(III)inamide-GDP = adenosylcob(III)alamin 5'-phosphate + GMP + H(+). The protein operates within cofactor biosynthesis; adenosylcobalamin biosynthesis; adenosylcobalamin from cob(II)yrinate a,c-diamide: step 7/7. In terms of biological role, joins adenosylcobinamide-GDP and alpha-ribazole to generate adenosylcobalamin (Ado-cobalamin). Also synthesizes adenosylcobalamin 5'-phosphate from adenosylcobinamide-GDP and alpha-ribazole 5'-phosphate. The polypeptide is Adenosylcobinamide-GDP ribazoletransferase (Thermoplasma acidophilum (strain ATCC 25905 / DSM 1728 / JCM 9062 / NBRC 15155 / AMRC-C165)).